We begin with the raw amino-acid sequence, 417 residues long: UDP-N-acetylglucosamine 1-carboxyvinyltransferase (417 aa).

22-23 (KN) provides a ligand contact to phosphoenolpyruvate. UDP-N-acetyl-alpha-D-glucosamine is bound at residue arginine 92. Residue cysteine 116 is the Proton donor of the active site. Cysteine 116 bears the 2-(S-cysteinyl)pyruvic acid O-phosphothioketal mark. Residues 121-125 (RPIDL), aspartate 306, and isoleucine 328 contribute to the UDP-N-acetyl-alpha-D-glucosamine site.

This sequence belongs to the EPSP synthase family. MurA subfamily.

It is found in the cytoplasm. The enzyme catalyses phosphoenolpyruvate + UDP-N-acetyl-alpha-D-glucosamine = UDP-N-acetyl-3-O-(1-carboxyvinyl)-alpha-D-glucosamine + phosphate. The protein operates within cell wall biogenesis; peptidoglycan biosynthesis. Cell wall formation. Adds enolpyruvyl to UDP-N-acetylglucosamine. This chain is UDP-N-acetylglucosamine 1-carboxyvinyltransferase, found in Buchnera aphidicola subsp. Schizaphis graminum (strain Sg).